A 78-amino-acid chain; its full sequence is DNA-directed RNA polymerase subunit Rpo5 (78 aa).

It belongs to the archaeal Rpo5/eukaryotic RPB5 RNA polymerase subunit family. As to quaternary structure, part of the RNA polymerase complex.

The protein localises to the cytoplasm. The enzyme catalyses RNA(n) + a ribonucleoside 5'-triphosphate = RNA(n+1) + diphosphate. DNA-dependent RNA polymerase (RNAP) catalyzes the transcription of DNA into RNA using the four ribonucleoside triphosphates as substrates. The protein is DNA-directed RNA polymerase subunit Rpo5 of Methanococcus vannielii (strain ATCC 35089 / DSM 1224 / JCM 13029 / OCM 148 / SB).